We begin with the raw amino-acid sequence, 307 residues long: Ribosomal protein L11 methyltransferase (307 aa).

S-adenosyl-L-methionine-binding residues include Thr-154, Gly-178, Asp-200, and Asn-242.

This sequence belongs to the methyltransferase superfamily. PrmA family.

The protein resides in the cytoplasm. It carries out the reaction L-lysyl-[protein] + 3 S-adenosyl-L-methionine = N(6),N(6),N(6)-trimethyl-L-lysyl-[protein] + 3 S-adenosyl-L-homocysteine + 3 H(+). Methylates ribosomal protein L11. This is Ribosomal protein L11 methyltransferase from Syntrophotalea carbinolica (strain DSM 2380 / NBRC 103641 / GraBd1) (Pelobacter carbinolicus).